We begin with the raw amino-acid sequence, 770 residues long: tRNA(Met) cytidine acetyltransferase TmcA 2 (770 aa).

Gln-209 and Arg-390 together coordinate ATP. The N-acetyltransferase domain occupies 458 to 608 (MIMLDGIHHK…YPVVVIRPIS (151 aa)). Position 533 to 535 (533 to 535 (IAV)) interacts with acetyl-CoA.

This sequence belongs to the TmcA family.

The protein resides in the cytoplasm. The enzyme catalyses cytidine(34) in elongator tRNA(Met) + acetyl-CoA + ATP + H2O = N(4)-acetylcytidine(34) in elongator tRNA(Met) + ADP + phosphate + CoA + H(+). The catalysed reaction is a cytidine in RNA + acetyl-CoA + ATP + H2O = an N(4)-acetylcytidine in RNA + ADP + phosphate + CoA + H(+). It catalyses the reaction a cytidine in tRNA + acetyl-CoA + ATP + H2O = an N(4)-acetylcytidine in tRNA + ADP + phosphate + CoA + H(+). It carries out the reaction a cytidine in mRNA + acetyl-CoA + ATP + H2O = an N(4)-acetylcytidine in mRNA + ADP + phosphate + CoA + H(+). Functionally, catalyzes the formation of N(4)-acetylcytidine (ac(4)C) at the wobble position of tRNA(Met), by using acetyl-CoA as an acetyl donor and ATP (or GTP). Catalyzes the formation of 41 N(4)-acetylcytidine (ac(4)C) sites in RNA, almost always on the middle C of a CCG motif. Modifications are found mostly in tRNA, with small amounts found in rRNA and mRNA. This chain is tRNA(Met) cytidine acetyltransferase TmcA 2, found in Saccharolobus solfataricus (strain ATCC 35092 / DSM 1617 / JCM 11322 / P2) (Sulfolobus solfataricus).